The following is a 649-amino-acid chain: Transmembrane and coiled-coil domains protein 1 (649 aa).

N-acetylmethionine is present on Met1. Disordered stretches follow at residues 1-37 (MEPSGSEQLYEDPDPGGKSQDAEARRQTESEQKLSKM), 58-83 (HQRRRSSVSPHDVQQIQTDPEPEVDL), 110-166 (RVPP…PTSS), and 197-222 (LAQTSSAVASSTDGSIHTESVDGIPD). Over 1–587 (MEPSGSEQLY…ARNLLGKLIN (587 aa)) the chain is Cytoplasmic. The span at 20-34 (QDAEARRQTESEQKL) shows a compositional bias: basic and acidic residues. Residues 64 to 75 (SVSPHDVQQIQT) show a composition bias toward polar residues. Positions 113–125 (PKMKRGTSLHSRR) are enriched in basic residues. Over residues 156–166 (SSSTTDAPTSS) the composition is skewed to low complexity. Polar residues predominate over residues 197–214 (LAQTSSAVASSTDGSIHT). The stretch at 224 to 310 (QRTKAAIAHL…KLREVEQNGI (87 aa)) forms a coiled coil. Phosphoserine occurs at positions 378 and 410. Residues 411–433 (PKYGSEEDCSSATSGSVGANSTT) are disordered. Polar residues predominate over residues 420 to 433 (SSATSGSVGANSTT). A coiled-coil region spans residues 457–566 (ALLHEVQEIR…KMELQQQQQQ (110 aa)). A run of 2 helical transmembrane segments spans residues 588 to 608 (ILLAVMAVLLVFVSTVANCVV) and 621 to 641 (LFLVAFIAFLWKHWDALFSYV). Residues 642–649 (DRLFSPPR) are Cytoplasmic-facing.

This sequence belongs to the TEX28 family. May form homodimers and heterodimers with TMCC2 or TMCC3 via the coiled-coil domains. Interacts with ribosomal proteins RPL4 and RPS6.

Its subcellular location is the endoplasmic reticulum membrane. Functionally, endoplasmic reticulum membrane protein that promotes endoplasmic reticulum-associated endosome fission. Localizes to contact sites between the endoplasmic reticulum and endosomes and acts by promoting recruitment of the endoplasmic reticulum to endosome tubules for fission. Endosome membrane fission of early and late endosomes is essential to separate regions destined for lysosomal degradation from carriers to be recycled to the plasma membrane. In Mus musculus (Mouse), this protein is Transmembrane and coiled-coil domains protein 1 (Tmcc1).